Here is a 281-residue protein sequence, read N- to C-terminus: MAQKIVRVGDIQIGNDLPFVLFGGMNVLESRDLAMQVCEEYVRVTEKLGIPYVFKASFDKANRSSIHSFRGPGLEEGMKIFEEIKKTFKVPVITDVHEPFQAQPVAEVCDIIQLPAFLSRQTDLVVAMARTNAVINIKKAQFLAPQEMKHILTKCEEAGNDRLILCERGSSFGYNNLVVDMLGFGIMKQFEYPVFFDVTHALQMPGGRADSAGGRRAQVTDLAKAGLSQKLAGLFLEAHPDPEHAKCDGPCALRLNKLEAFLSQLKQLDELIKSFPAIETA.

It belongs to the KdsA family.

It localises to the cytoplasm. It catalyses the reaction D-arabinose 5-phosphate + phosphoenolpyruvate + H2O = 3-deoxy-alpha-D-manno-2-octulosonate-8-phosphate + phosphate. It participates in carbohydrate biosynthesis; 3-deoxy-D-manno-octulosonate biosynthesis; 3-deoxy-D-manno-octulosonate from D-ribulose 5-phosphate: step 2/3. The protein operates within bacterial outer membrane biogenesis; lipopolysaccharide biosynthesis. The polypeptide is 2-dehydro-3-deoxyphosphooctonate aldolase (Pseudomonas aeruginosa (strain UCBPP-PA14)).